The following is a 210-amino-acid chain: Large ribosomal subunit protein uL4 (210 aa).

The tract at residues 46–77 (QGTHKSKERGEIAGSTKKIKKQKGTGTARAGS) is disordered.

This sequence belongs to the universal ribosomal protein uL4 family. Part of the 50S ribosomal subunit.

Its function is as follows. One of the primary rRNA binding proteins, this protein initially binds near the 5'-end of the 23S rRNA. It is important during the early stages of 50S assembly. It makes multiple contacts with different domains of the 23S rRNA in the assembled 50S subunit and ribosome. In terms of biological role, forms part of the polypeptide exit tunnel. This Amoebophilus asiaticus (strain 5a2) protein is Large ribosomal subunit protein uL4.